The primary structure comprises 38 residues: Large ribosomal subunit protein bL36 (38 aa).

The protein belongs to the bacterial ribosomal protein bL36 family.

The sequence is that of Large ribosomal subunit protein bL36 from Lacticaseibacillus casei (strain BL23) (Lactobacillus casei).